Here is a 598-residue protein sequence, read N- to C-terminus: Nitrate/nitrite sensor protein NarX (598 aa).

Residues 1 to 14 (MLKRCLSPLTLVNQ) lie on the Cytoplasmic side of the membrane. The chain crosses the membrane as a helical span at residues 15 to 37 (VALIVLLSTAIGLAGMAVSGWLV). Topologically, residues 38–151 (QGVQGSAHAI…DRTTEMRIET (114 aa)) are periplasmic. A helical transmembrane segment spans residues 152 to 174 (VVLVHRVMAVFMALLLVFTIIWL). Residues 175-598 (RARLLQPWRQ…FTDVQGDTHE (424 aa)) are Cytoplasmic-facing. One can recognise an HAMP domain in the interval 176 to 228 (ARLLQPWRQLLAMASAVSHRDFTQRANISGRNEMAMLGTALNNMSAELAESYA). Positions 393-587 (TIARELHDSI…EVVVTFIPEK (195 aa)) constitute a Histidine kinase domain. His-399 bears the Phosphohistidine; by autocatalysis mark.

The protein resides in the cell inner membrane. It carries out the reaction ATP + protein L-histidine = ADP + protein N-phospho-L-histidine.. Functionally, acts as a sensor for nitrate/nitrite and transduces signal of nitrate availability to the NarL protein and of both nitrate/nitrite to the NarP protein. NarX probably activates NarL and NarP by phosphorylation in the presence of nitrate. NarX also plays a negative role in controlling NarL activity, probably through dephosphorylation in the absence of nitrate. The polypeptide is Nitrate/nitrite sensor protein NarX (narX) (Escherichia coli O157:H7).